The chain runs to 301 residues: Light-independent protochlorophyllide reductase iron-sulfur ATP-binding protein (301 aa).

A disordered region spans residues 1 to 26; sequence MSNGSVPVSGIGGRGDGEGSSQVHME. ATP contacts are provided by residues 44–49 and K73; that span reads GIGKST. Residue S48 coordinates Mg(2+). Positions 129 and 163 each coordinate [4Fe-4S] cluster. 214 to 215 provides a ligand contact to ATP; the sequence is NR.

Belongs to the NifH/BchL/ChlL family. Homodimer. Protochlorophyllide reductase is composed of three subunits; BchL, BchN and BchB. The cofactor is [4Fe-4S] cluster.

The enzyme catalyses chlorophyllide a + oxidized 2[4Fe-4S]-[ferredoxin] + 2 ADP + 2 phosphate = protochlorophyllide a + reduced 2[4Fe-4S]-[ferredoxin] + 2 ATP + 2 H2O. Its pathway is porphyrin-containing compound metabolism; bacteriochlorophyll biosynthesis (light-independent). Component of the dark-operative protochlorophyllide reductase (DPOR) that uses Mg-ATP and reduced ferredoxin to reduce ring D of protochlorophyllide (Pchlide) to form chlorophyllide a (Chlide). This reaction is light-independent. The L component serves as a unique electron donor to the NB-component of the complex, and binds Mg-ATP. The sequence is that of Light-independent protochlorophyllide reductase iron-sulfur ATP-binding protein from Halorhodospira halophila (strain DSM 244 / SL1) (Ectothiorhodospira halophila (strain DSM 244 / SL1)).